The sequence spans 981 residues: Ubiquitin carboxyl-terminal hydrolase 37 (981 aa).

The short motif at 32–34 (KEN) is the KEN box 1 element. 2 short sequence motifs (D-box) span residues 71-79 (RLMLTLQDN) and 96-105 (RLFLDAVHQN). Residues 111-306 (MKPSQGSGSF…TPSAKRSLGF (196 aa)) form a disordered region. The residue at position 114 (Ser114) is a Phosphoserine. Residues 135–148 (RQLSYSDNQVSSKR) are compositionally biased toward polar residues. The span at 149–159 (GSLETKDDTPF) shows a compositional bias: basic and acidic residues. Positions 160 to 168 (RKVLGNPSR) match the D-box 3 motif. Residue Ser170 is modified to Phosphoserine. Positions 183–200 (RTIPSLTSTSTPLRSGLL) are enriched in low complexity. Phosphoserine is present on Ser212. The short motif at 223–225 (KEN) is the KEN box 2 element. Basic and acidic residues predominate over residues 245-259 (SREKQLSLKQSEENR). The span at 283 to 300 (PGSTNLDRTNISSQTPSA) shows a compositional bias: polar residues. Residues 343–953 (QGFSNLGNTC…SGYIFFYMHK (611 aa)) enclose the USP domain. The Nucleophile role is filled by Cys352. Position 630 is a phosphoserine; by CDK2 (Ser630). Residues Ser652 and Ser654 each carry the phosphoserine modification. 2 disordered regions span residues 670-705 (EMSG…FDGM) and 721-797 (EASP…GEVD). Composition is skewed to basic and acidic residues over residues 683–697 (KDSK…KSEL) and 721–734 (EASP…DDKP). One can recognise a UIM 1 domain in the interval 706-725 (SEEELLAAVLEISKREASPS). Phosphoserine is present on Ser772. A compositionally biased stretch (basic and acidic residues) spans 776-788 (ITKDCDENKENKT). The KEN box 3 signature appears at 784–786 (KEN). UIM domains are found at residues 808–827 (REEQ…QEAW) and 830–849 (KEDD…FNNS). His908 functions as the Proton acceptor in the catalytic mechanism.

This sequence belongs to the peptidase C19 family. Interacts with FZR1/CDH1. Interacts with CDT1. Post-translationally, polyubiquitinated via 'Lys-11'-linked ubiquitin by the APC(CDH1) complex during late mitosis, leading to its degradation. Able to mediate auto-deubiquitination. In terms of processing, phosphorylated at Ser-630 by CDK2 during G1/S phase but not during mitosis; phosphorylation at Ser-630 is required for deubiquitinase activity. Also polyubiquitinated during early G1 phase, without leading to degradation. Phosphorylated at Ser-114 by ATM following DNA damage, which in turn increases its deubiquitination activity towards BLM.

It localises to the nucleus. It is found in the chromosome. It catalyses the reaction Thiol-dependent hydrolysis of ester, thioester, amide, peptide and isopeptide bonds formed by the C-terminal Gly of ubiquitin (a 76-residue protein attached to proteins as an intracellular targeting signal).. In terms of biological role, deubiquitinase that plays a role in different processes including cell cycle regulation, DNA replication or DNA damage response. Antagonizes the anaphase-promoting complex (APC/C) during G1/S transition by mediating deubiquitination of cyclin-A (CCNA1 and CCNA2), thereby promoting S phase entry. Specifically mediates deubiquitination of 'Lys-11'-linked polyubiquitin chains, a specific ubiquitin-linkage type mediated by the APC/C complex. Phosphorylation at Ser-628 during G1/S phase maximizes the deubiquitinase activity, leading to prevent degradation of cyclin-A (CCNA1 and CCNA2). Plays an important role in the regulation of DNA replication by stabilizing the licensing factor CDT1. Also plays an essential role beyond S-phase entry to promote the efficiency and fidelity of replication by deubiquitinating checkpoint kinase 1/CHK1, promoting its stability. Sustains the DNA damage response (DDR) by deubiquitinating and stabilizing the ATP-dependent DNA helicase BLM. Mechanistically, DNA double-strand breaks (DSB) promotes ATM-mediated phosphorylation of USP37 and enhances the binding between USP37 and BLM. Promotes cell migration by deubiquitinating and stabilizing the epithelial-mesenchymal transition (EMT)-inducing transcription factor SNAI. Plays a role in the regulation of mitotic spindle assembly and mitotic progression by associating with chromatin-associated WAPL and stabilizing it through deubiquitination. The protein is Ubiquitin carboxyl-terminal hydrolase 37 (USP37) of Bos taurus (Bovine).